Here is a 266-residue protein sequence, read N- to C-terminus: Thiazole synthase (266 aa).

Catalysis depends on K107, which acts as the Schiff-base intermediate with DXP. 1-deoxy-D-xylulose 5-phosphate contacts are provided by residues G168, 194–195 (AG), and 216–217 (NT).

It belongs to the ThiG family. Homotetramer. Forms heterodimers with either ThiH or ThiS.

Its subcellular location is the cytoplasm. It carries out the reaction [ThiS sulfur-carrier protein]-C-terminal-Gly-aminoethanethioate + 2-iminoacetate + 1-deoxy-D-xylulose 5-phosphate = [ThiS sulfur-carrier protein]-C-terminal Gly-Gly + 2-[(2R,5Z)-2-carboxy-4-methylthiazol-5(2H)-ylidene]ethyl phosphate + 2 H2O + H(+). The protein operates within cofactor biosynthesis; thiamine diphosphate biosynthesis. Its function is as follows. Catalyzes the rearrangement of 1-deoxy-D-xylulose 5-phosphate (DXP) to produce the thiazole phosphate moiety of thiamine. Sulfur is provided by the thiocarboxylate moiety of the carrier protein ThiS. In vitro, sulfur can be provided by H(2)S. In Azorhizobium caulinodans (strain ATCC 43989 / DSM 5975 / JCM 20966 / LMG 6465 / NBRC 14845 / NCIMB 13405 / ORS 571), this protein is Thiazole synthase.